The sequence spans 176 residues: Glutamyl-tRNA(Gln) amidotransferase subunit F, mitochondrial (176 aa).

The protein belongs to the GatF family. As to quaternary structure, subunit of the heterotrimeric GatFAB amidotransferase (AdT) complex, composed of A, B and F subunits.

Its subcellular location is the mitochondrion inner membrane. It catalyses the reaction L-glutamyl-tRNA(Gln) + L-glutamine + ATP + H2O = L-glutaminyl-tRNA(Gln) + L-glutamate + ADP + phosphate + H(+). Its function is as follows. Allows the formation of correctly charged Gln-tRNA(Gln) through the transamidation of misacylated Glu-tRNA(Gln) in the mitochondria. The reaction takes place in the presence of glutamine and ATP through an activated gamma-phospho-Glu-tRNA(Gln). Required for proper protein synthesis within the mitochondrion. The chain is Glutamyl-tRNA(Gln) amidotransferase subunit F, mitochondrial from Yarrowia lipolytica (strain CLIB 122 / E 150) (Yeast).